The chain runs to 451 residues: 3-carboxy-cis,cis-muconate cycloisomerase (451 aa).

Belongs to the class-II fumarase/aspartase family.

It catalyses the reaction 2-(carboxymethyl)-5-oxo-2,5-dihydro-2-furoate = 3-carboxy-cis,cis-muconate + H(+). In terms of biological role, catalyzes an anti cycloisomerization. The sequence is that of 3-carboxy-cis,cis-muconate cycloisomerase (pcaB) from Bradyrhizobium diazoefficiens (strain JCM 10833 / BCRC 13528 / IAM 13628 / NBRC 14792 / USDA 110).